A 363-amino-acid polypeptide reads, in one-letter code: MSGNTYGKLFTVTTAGESHGPALVAIVDGCPPGLEISLADLQHDLDRRKPGTSRHTTQRQEADEVEILSGVFEGRTTGCSIGLLIRNTDQKSKDYSAIKDLFRPAHADYTYHHKYGVRDYRGGGRSSARETAMRVAAGAIAKKYLASQGITVRGYMSQLGPIEIPFKTWESVEQNAFFSPDPDKVPELEAYMDQLRRDQDSVGAKITVVAEGVMPGLGEPIFDRLDAELAHALMSINAVKGVEIGAGFASVAQRGTEHRDELTPQGFLSNNAGGILGGISSGQPIVAHLALKPTSSITTPGRSIDIDGNPVDVITKGRHDPCVGIRATPIAEAMMAIALMDHLLRHRAQNADVKVNTPVLGQL.

2 residues coordinate NADP(+): Arg48 and Arg54. FMN-binding positions include 125–127 (RSS), 237–238 (NA), Gly277, 292–296 (KPTSS), and Arg318.

This sequence belongs to the chorismate synthase family. In terms of assembly, homotetramer. Requires FMNH2 as cofactor.

The catalysed reaction is 5-O-(1-carboxyvinyl)-3-phosphoshikimate = chorismate + phosphate. It functions in the pathway metabolic intermediate biosynthesis; chorismate biosynthesis; chorismate from D-erythrose 4-phosphate and phosphoenolpyruvate: step 7/7. Catalyzes the anti-1,4-elimination of the C-3 phosphate and the C-6 proR hydrogen from 5-enolpyruvylshikimate-3-phosphate (EPSP) to yield chorismate, which is the branch point compound that serves as the starting substrate for the three terminal pathways of aromatic amino acid biosynthesis. This reaction introduces a second double bond into the aromatic ring system. This chain is Chorismate synthase, found in Pseudomonas putida (strain GB-1).